The following is a 445-amino-acid chain: Retrovirus-related Pol polyprotein from type-1 retrotransposable element R2 (445 aa).

In terms of domain architecture, Reverse transcriptase spans 1–114 (QPSVFNLVKW…LSRDDSLAKA (114 aa)). Positions 115 to 445 (MLASAGPAAE…GATPRQLIEY (331 aa)) are nucleic acid-binding endonuclease. The span at 380 to 389 (GPRPAHHHQP) shows a compositional bias: basic residues. Positions 380-445 (GPRPAHHHQP…GATPRQLIEY (66 aa)) are disordered. The span at 396-405 (ATANTGTLQS) shows a compositional bias: polar residues.

The enzyme catalyses DNA(n) + a 2'-deoxyribonucleoside 5'-triphosphate = DNA(n+1) + diphosphate. The sequence is that of Retrovirus-related Pol polyprotein from type-1 retrotransposable element R2 from Popillia japonica (Japanese beetle).